The chain runs to 21 residues: Dahlein-5.4 (21 aa).

Expressed by the skin dorsal glands.

It localises to the secreted. In terms of biological role, has no antimicrobial activity. Strongly inhibits the formation of NO by neuronal nitric oxide synthase at micromolar concentrations. In Ranoidea dahlii (Dahl's aquatic frog), this protein is Dahlein-5.4.